The primary structure comprises 359 residues: Putative plant UBX domain-containing protein 15 (359 aa).

The UBX domain occupies 277–357; it reads DRSVVCSISV…GIANSIISVT (81 aa).

The protein is Putative plant UBX domain-containing protein 15 of Arabidopsis thaliana (Mouse-ear cress).